The following is a 507-amino-acid chain: Dolichyl pyrophosphate Man9GlcNAc2 alpha-1,3-glucosyltransferase (507 aa).

At Met-1–Glu-2 the chain is on the cytoplasmic side. The chain crosses the membrane as a helical span at residues Ser-3–Leu-23. Over Asn-24–Thr-114 the chain is Lumenal. Residue Asn-59 is glycosylated (N-linked (GlcNAc...) asparagine). Residues Thr-115–Leu-135 form a helical membrane-spanning segment. Residues Lys-136–Lys-143 are Cytoplasmic-facing. The chain crosses the membrane as a helical span at residues Ile-144–Phe-164. The Lumenal portion of the chain corresponds to Gln-165–Gly-172. The chain crosses the membrane as a helical span at residues Phe-173–Phe-193. At Cys-194 to Ala-229 the chain is on the cytoplasmic side. A helical transmembrane segment spans residues Leu-230–Leu-250. At Thr-251–Gln-297 the chain is on the lumenal side. A helical transmembrane segment spans residues Ile-298 to Val-318. Over Gln-319 to Cys-332 the chain is Cytoplasmic. Residues Ala-333–Leu-353 form a helical membrane-spanning segment. The Lumenal portion of the chain corresponds to Pro-354–Glu-361. The chain crosses the membrane as a helical span at residues Ile-362 to Leu-382. Residues Lys-383–Gln-385 lie on the Cytoplasmic side of the membrane. A helical transmembrane segment spans residues Leu-386 to Pro-406. The Lumenal segment spans residues Met-407–Arg-437. Residues Ile-438 to Val-458 traverse the membrane as a helical segment. The Cytoplasmic segment spans residues Thr-459–Asp-468. A helical membrane pass occupies residues Leu-469–Phe-489. Topologically, residues Asn-490 to Asp-507 are lumenal.

This sequence belongs to the ALG6/ALG8 glucosyltransferase family.

The protein localises to the endoplasmic reticulum membrane. The enzyme catalyses an alpha-D-Man-(1-&gt;2)-alpha-D-Man-(1-&gt;2)-alpha-D-Man-(1-&gt;3)-[alpha-D-Man-(1-&gt;2)-alpha-D-Man-(1-&gt;3)-[alpha-D-Man-(1-&gt;2)-alpha-D-Man-(1-&gt;6)]-alpha-D-Man-(1-&gt;6)]-beta-D-Man-(1-&gt;4)-beta-D-GlcNAc-(1-&gt;4)-alpha-D-GlcNAc-diphospho-di-trans,poly-cis-dolichol + a di-trans,poly-cis-dolichyl beta-D-glucosyl phosphate = an alpha-D-Glc-(1-&gt;3)-alpha-D-Man-(1-&gt;2)-alpha-D-Man-(1-&gt;2)-alpha-D-Man-(1-&gt;3)-[alpha-D-Man-(1-&gt;2)-alpha-D-Man-(1-&gt;3)-[alpha-D-Man-(1-&gt;2)-alpha-D-Man-(1-&gt;6)]-alpha-D-Man-(1-&gt;6)]-beta-D-Man-(1-&gt;4)-beta-D-GlcNAc-(1-&gt;4)-alpha-D-GlcNAc-diphospho-di-trans,poly-cis-dolichol + a di-trans,poly-cis-dolichyl phosphate + H(+). It functions in the pathway protein modification; protein glycosylation. Its function is as follows. Dolichyl pyrophosphate Man9GlcNAc2 alpha-1,3-glucosyltransferase that operates in the biosynthetic pathway of dolichol-linked oligosaccharides, the glycan precursors employed in protein asparagine (N)-glycosylation. The assembly of dolichol-linked oligosaccharides begins on the cytosolic side of the endoplasmic reticulum membrane and finishes in its lumen. The sequential addition of sugars to dolichol pyrophosphate produces dolichol-linked oligosaccharides containing fourteen sugars, including two GlcNAcs, nine mannoses and three glucoses. Once assembled, the oligosaccharide is transferred from the lipid to nascent proteins by oligosaccharyltransferases. In the lumen of the endoplasmic reticulum, adds the first glucose residue from dolichyl phosphate glucose (Dol-P-Glc) onto the lipid-linked oligosaccharide intermediate Man(9)GlcNAc(2)-PP-Dol to produce Glc(1)Man(9)GlcNAc(2)-PP-Dol. Glc(1)Man(9)GlcNAc(2)-PP-Dol is a substrate for ALG8, the following enzyme in the biosynthetic pathway. The sequence is that of Dolichyl pyrophosphate Man9GlcNAc2 alpha-1,3-glucosyltransferase from Rattus norvegicus (Rat).